The following is a 309-amino-acid chain: Probable 4-hydroxy-2-oxoglutarate aldolase, mitochondrial (309 aa).

A substrate-binding site is contributed by 49–50; the sequence is SN. The active-site Schiff-base intermediate with substrate is K173.

The protein belongs to the DapA family.

It catalyses the reaction (4S)-4-hydroxy-2-oxoglutarate = glyoxylate + pyruvate. It carries out the reaction (4R)-4-hydroxy-2-oxoglutarate = glyoxylate + pyruvate. Its activity is regulated as follows. Inhibited by divalent cations. Its function is as follows. Catalyzes the final step in the metabolic pathway of hydroxyproline. Involved in osmoadaptation. This chain is Probable 4-hydroxy-2-oxoglutarate aldolase, mitochondrial, found in Emericella nidulans (strain FGSC A4 / ATCC 38163 / CBS 112.46 / NRRL 194 / M139) (Aspergillus nidulans).